Consider the following 427-residue polypeptide: Glutamate-1-semialdehyde 2,1-aminomutase (427 aa).

An N6-(pyridoxal phosphate)lysine modification is found at Lys-263.

Belongs to the class-III pyridoxal-phosphate-dependent aminotransferase family. HemL subfamily. Homodimer. Pyridoxal 5'-phosphate is required as a cofactor.

It is found in the cytoplasm. It carries out the reaction (S)-4-amino-5-oxopentanoate = 5-aminolevulinate. It functions in the pathway porphyrin-containing compound metabolism; protoporphyrin-IX biosynthesis; 5-aminolevulinate from L-glutamyl-tRNA(Glu): step 2/2. In Caldicellulosiruptor saccharolyticus (strain ATCC 43494 / DSM 8903 / Tp8T 6331), this protein is Glutamate-1-semialdehyde 2,1-aminomutase.